The chain runs to 338 residues: Flap endonuclease 1 (338 aa).

Residues 1–98 (MGVNLSSILI…ETLRERSLIK (98 aa)) form an N-domain region. Mg(2+) is bound by residues D27, D80, E152, E154, D173, D175, and D236. Positions 116–257 (KIRSLSSRIN…TALSLIKKYN (142 aa)) are I-domain. Positions 330–338 (HQSSLDRFF) are interaction with PCNA.

It belongs to the XPG/RAD2 endonuclease family. FEN1 subfamily. In terms of assembly, interacts with PCNA. PCNA stimulates the nuclease activity without altering cleavage specificity. Mg(2+) serves as cofactor.

Its function is as follows. Structure-specific nuclease with 5'-flap endonuclease and 5'-3' exonuclease activities involved in DNA replication and repair. During DNA replication, cleaves the 5'-overhanging flap structure that is generated by displacement synthesis when DNA polymerase encounters the 5'-end of a downstream Okazaki fragment. Binds the unpaired 3'-DNA end and kinks the DNA to facilitate 5' cleavage specificity. Cleaves one nucleotide into the double-stranded DNA from the junction in flap DNA, leaving a nick for ligation. Also involved in the base excision repair (BER) pathway. Acts as a genome stabilization factor that prevents flaps from equilibrating into structures that lead to duplications and deletions. Also possesses 5'-3' exonuclease activity on nicked or gapped double-stranded DNA. This is Flap endonuclease 1 from Picrophilus torridus (strain ATCC 700027 / DSM 9790 / JCM 10055 / NBRC 100828 / KAW 2/3).